Consider the following 131-residue polypeptide: Large-conductance mechanosensitive channel (131 aa).

A run of 2 helical transmembrane segments spans residues 14 to 34 and 71 to 91; these read VMDM…VTSL and GNFI…FLLV.

The protein belongs to the MscL family. Homopentamer.

The protein localises to the cell inner membrane. In terms of biological role, channel that opens in response to stretch forces in the membrane lipid bilayer. May participate in the regulation of osmotic pressure changes within the cell. The protein is Large-conductance mechanosensitive channel of Dinoroseobacter shibae (strain DSM 16493 / NCIMB 14021 / DFL 12).